Here is a 241-residue protein sequence, read N- to C-terminus: MRTATITEFSSSYRSLPGLLHLLQFGDSALPIGGFSFSNGLESAIQQNLVHDKETLREFTLTAMNQAATSDRIALLTAHRAARADDRGALQVIDKAVFERKLNEETRLMTVRMGRKLCELSASIIDDRLNRDWLECIKTAETPGTHPVSLGLAFAALDVDGRDAFGAQQYGVATTILGAALRLMRVSFMDTQKILLEATSTVAPAYEEIADAGIEDMASFAPMVDILAAVHVKGHVRMFMN.

Belongs to the UreF family. UreD, UreF and UreG form a complex that acts as a GTP-hydrolysis-dependent molecular chaperone, activating the urease apoprotein by helping to assemble the nickel containing metallocenter of UreC. The UreE protein probably delivers the nickel.

The protein localises to the cytoplasm. Its function is as follows. Required for maturation of urease via the functional incorporation of the urease nickel metallocenter. The polypeptide is Urease accessory protein UreF 1 (Brucella melitensis biotype 1 (strain ATCC 23456 / CCUG 17765 / NCTC 10094 / 16M)).